The sequence spans 430 residues: Serine--tRNA ligase (430 aa).

237–239 is an L-serine binding site; that stretch reads TAE. 268–270 is a binding site for ATP; sequence RRE. Glu291 provides a ligand contact to L-serine. Residue 355–358 participates in ATP binding; that stretch reads EISS. Ser391 lines the L-serine pocket.

It belongs to the class-II aminoacyl-tRNA synthetase family. Type-1 seryl-tRNA synthetase subfamily. Homodimer. The tRNA molecule binds across the dimer.

The protein localises to the cytoplasm. The catalysed reaction is tRNA(Ser) + L-serine + ATP = L-seryl-tRNA(Ser) + AMP + diphosphate + H(+). The enzyme catalyses tRNA(Sec) + L-serine + ATP = L-seryl-tRNA(Sec) + AMP + diphosphate + H(+). The protein operates within aminoacyl-tRNA biosynthesis; selenocysteinyl-tRNA(Sec) biosynthesis; L-seryl-tRNA(Sec) from L-serine and tRNA(Sec): step 1/1. In terms of biological role, catalyzes the attachment of serine to tRNA(Ser). Is also able to aminoacylate tRNA(Sec) with serine, to form the misacylated tRNA L-seryl-tRNA(Sec), which will be further converted into selenocysteinyl-tRNA(Sec). In Magnetococcus marinus (strain ATCC BAA-1437 / JCM 17883 / MC-1), this protein is Serine--tRNA ligase.